A 318-amino-acid polypeptide reads, in one-letter code: Pantothenate kinase (318 aa).

96–103 is an ATP binding site; the sequence is GSVSVGKS.

This sequence belongs to the prokaryotic pantothenate kinase family.

Its subcellular location is the cytoplasm. The enzyme catalyses (R)-pantothenate + ATP = (R)-4'-phosphopantothenate + ADP + H(+). It participates in cofactor biosynthesis; coenzyme A biosynthesis; CoA from (R)-pantothenate: step 1/5. The protein is Pantothenate kinase of Bradyrhizobium sp. (strain ORS 278).